We begin with the raw amino-acid sequence, 1561 residues long: Formin-E (1561 aa).

Over residues 1-28 the composition is skewed to low complexity; that stretch reads MDNHSSSSNPSSLSSSSSSSSSSSSFLS. Disordered stretches follow at residues 1–63, 77–187, 211–279, and 305–365; these read MDNH…EEKP, EEEE…GKLS, PIIV…SSED, and ILRS…NLNY. Basic and acidic residues predominate over residues 29–51; the sequence is DHVKKEEQNGLDTIKEEIENKIE. Positions 32 to 85 form a coiled coil; that stretch reads KKEEQNGLDTIKEEIENKIENEEEEEKIEEKPIEKVEEEKIIVQKEEEEKIEEE. Acidic residues predominate over residues 80-89; that stretch reads EKIEEEPIEK. The segment covering 103–120 has biased composition (polar residues); sequence DNINTTVEAKTLETSTEP. Residues 158 to 208 are a coiled coil; sequence EQQEQQEKQKEETKPSIREEVKEKIKGKLSEIKEEIKDIKEEIKHVIREEV. Basic and acidic residues predominate over residues 162 to 187; sequence QQEKQKEETKPSIREEVKEKIKGKLS. Residues 220–229 show a composition bias toward pro residues; that stretch reads SPPPPPPPPS. Positions 230–258 are enriched in low complexity; it reads ITVQSSSPVSSQISSPVSSPVSSPKPSVT. Over residues 305-320 the composition is skewed to polar residues; that stretch reads ILRSKSSPNPGANNPN. A compositionally biased stretch (low complexity) spans 326–365; that stretch reads NNSSSSSSSNNNSDNNNNSDNNSNNNNINNNNSSSNNLNY. A Phorbol-ester/DAG-type zinc finger spans residues 379–427; sequence YHDFKIHRGTSSCVYCGENTRLWSTSYKCFFCGVVCHKKCLDSMNTIPC. Low complexity predominate over residues 465–534; the sequence is PSSITNSSSK…TSISSPPIAS (70 aa). The tract at residues 465 to 549 is disordered; that stretch reads PSSITNSSSK…PLLQQQQQQQ (85 aa). Residues 541–573 adopt a coiled-coil conformation; sequence LLQQQQQQQQQQQQQQQQQQQQQQQQQQISTTQ. One can recognise a GBD/FH3 domain in the interval 581–929; the sequence is SEKPDDDMIN…QISLHKGGFE (349 aa). Positions 952 to 989 form a coiled coil; the sequence is LNRKLGELEKQNIDKAMKIQEQDINIKSLLDLLKQLKD. Disordered regions lie at residues 1009–1092, 1466–1508, and 1526–1561; these read MEPP…VPKP, EEKR…SDED, and RQAK…PNKN. Residues 1017–1033 are compositionally biased toward low complexity; sequence SVKSPDDPNNAAPIVVA. The 63-residue stretch at 1019–1081 folds into the FH1 domain; it reads KSPDDPNNAA…LGAKKPPAGV (63 aa). A compositionally biased stretch (pro residues) spans 1034–1070; it reads PIPPPPPPISGAPPPPPPPPPPMKGGAGPPPPPPPPG. The segment covering 1071–1081 has biased composition (low complexity); sequence KLGAKKPPAGV. Residues 1086–1475 form the FH2 domain; it reads PPKVPKPSHP…EEKRLQQKQQ (390 aa). Positions 1398–1491 form a coiled coil; the sequence is LATASTEVEK…RKLTTSNESA (94 aa). A compositionally biased stretch (basic and acidic residues) spans 1466–1481; it reads EEKRLQQKQQRQERAV. Composition is skewed to polar residues over residues 1484 to 1498 and 1536 to 1561; these read LTTS…PNHA and HQIA…PNKN. One can recognise a DAD domain in the interval 1488–1518; that stretch reads NESASASPNHAKSTDDKSDEDDDIVNDLLMA.

Belongs to the formin homology family. Diaphanous subfamily. As to quaternary structure, interacts (via GBD/FH3 domain) with activated Rho-GTPases.

Functionally, formins play an important role in the nucleation of actin and the formation of linear actin filaments. This is Formin-E (forE) from Dictyostelium discoideum (Social amoeba).